A 150-amino-acid polypeptide reads, in one-letter code: Small ribosomal subunit protein uS11 (150 aa).

Residues 126 to 150 are disordered; sequence GRIEDVTPTPSDSTRRKGGRRGRRL. The segment covering 141–150 has biased composition (basic residues); sequence RKGGRRGRRL.

Belongs to the universal ribosomal protein uS11 family. In terms of assembly, component of the small ribosomal subunit (SSU). Mature N.crassa ribosomes consist of a small (40S) and a large (60S) subunit. The 40S small subunit contains 1 molecule of ribosomal RNA (18S rRNA) and at least 32 different proteins. The large 60S subunit contains 3 rRNA molecules (26S, 5.8S and 5S rRNA) and at least 42 different proteins.

It localises to the cytoplasm. Component of the ribosome, a large ribonucleoprotein complex responsible for the synthesis of proteins in the cell. The small ribosomal subunit (SSU) binds messenger RNAs (mRNAs) and translates the encoded message by selecting cognate aminoacyl-transfer RNA (tRNA) molecules. The large subunit (LSU) contains the ribosomal catalytic site termed the peptidyl transferase center (PTC), which catalyzes the formation of peptide bonds, thereby polymerizing the amino acids delivered by tRNAs into a polypeptide chain. The nascent polypeptides leave the ribosome through a tunnel in the LSU and interact with protein factors that function in enzymatic processing, targeting, and the membrane insertion of nascent chains at the exit of the ribosomal tunnel. uS11 is involved in nucleolar processing of pre-18S ribosomal RNA and ribosome assembly. This is Small ribosomal subunit protein uS11 (rps-14) from Neurospora crassa (strain ATCC 24698 / 74-OR23-1A / CBS 708.71 / DSM 1257 / FGSC 987).